The following is a 545-amino-acid chain: 4-coumarate--CoA ligase 2 (545 aa).

ATP contacts are provided by serine 192, serine 193, glycine 194, threonine 195, threonine 196, and lysine 200. (E)-4-coumaroyl-AMP contacts are provided by tyrosine 242 and serine 246. Lysine 263 lines the CoA pocket. Positions 265-334 are SBD1; that stretch reads DIAQFLELIP…AKFPNAKLGQ (70 aa). Alanine 312, glutamine 334, glycine 335, threonine 339, and methionine 347 together coordinate (E)-4-coumaroyl-AMP. ATP contacts are provided by glutamine 334, glycine 335, and threonine 339. The segment at 335–402 is SBD2; sequence GYGMTEAGPV…IRGDQIMKGY (68 aa). ATP contacts are provided by aspartate 423 and arginine 438. (E)-4-coumaroyl-AMP is bound by residues lysine 440 and lysine 444. Lysine 446 and glycine 447 together coordinate CoA. Lysine 529 is a binding site for ATP.

It belongs to the ATP-dependent AMP-binding enzyme family. Mg(2+) is required as a cofactor.

The enzyme catalyses (E)-4-coumarate + ATP + CoA = (E)-4-coumaroyl-CoA + AMP + diphosphate. It carries out the reaction (E)-4-coumarate + ATP + H(+) = (E)-4-coumaroyl-AMP + diphosphate. It catalyses the reaction (E)-4-coumaroyl-AMP + CoA = (E)-4-coumaroyl-CoA + AMP + H(+). It functions in the pathway phytoalexin biosynthesis; 3,4',5-trihydroxystilbene biosynthesis; 3,4',5-trihydroxystilbene from trans-4-coumarate: step 1/2. Functionally, carboxylate--CoA ligase that may use 4-coumarate as substrate. Follows a two-step reaction mechanism, wherein the carboxylate substrate first undergoes adenylation by ATP, followed by a thioesterification in the presence of CoA to yield the final CoA thioester. The polypeptide is 4-coumarate--CoA ligase 2 (4CL2) (Solanum tuberosum (Potato)).